A 127-amino-acid chain; its full sequence is MIMWQSLILISSGAALGASLRWGMGLILNPLFAAFSFGTLIANYLGCFIIGLIMAMIWQHPQFSGEWRLFMITGFLGSLTTFSSFSAEVMENFIQQKWLIGLGIMSAHLFGCLIFTGIGVLITRWLN.

4 consecutive transmembrane segments (helical) span residues 7–27, 37–57, 69–89, and 102–122; these read LILI…MGLI, FGTL…MAMI, LFMI…SAEV, and LGIM…GVLI. Na(+) is bound by residues G77 and T80.

The protein belongs to the fluoride channel Fluc/FEX (TC 1.A.43) family.

It is found in the cell inner membrane. The catalysed reaction is fluoride(in) = fluoride(out). With respect to regulation, na(+) is not transported, but it plays an essential structural role and its presence is essential for fluoride channel function. Its function is as follows. Fluoride-specific ion channel. Important for reducing fluoride concentration in the cell, thus reducing its toxicity. The polypeptide is Fluoride-specific ion channel FluC (Mannheimia succiniciproducens (strain KCTC 0769BP / MBEL55E)).